Reading from the N-terminus, the 219-residue chain is Dehydration-responsive element-binding protein 1E (219 aa).

Low complexity predominate over residues 1–19; the sequence is MEWAYYGSGYSSSGTPSPV. The tract at residues 1–44 is disordered; that stretch reads MEWAYYGSGYSSSGTPSPVGGDGDEDSYMTVSSAPPKRRAGRTK. The segment at residues 52-109 is a DNA-binding region (AP2/ERF); it reads VYKGVRSRNPGRWVCEVREPHGKQRIWLGTFETAEMAARAHDVAAMALRGRAACLNFA.

It belongs to the AP2/ERF transcription factor family. ERF subfamily.

It localises to the nucleus. Its function is as follows. Transcriptional activator that binds specifically to the DNA sequence 5'-[AG]CCGAC-3'. Binding to the C-repeat/DRE element mediates high salinity- and dehydration-inducible transcription. This chain is Dehydration-responsive element-binding protein 1E (DREB1E), found in Oryza sativa subsp. indica (Rice).